We begin with the raw amino-acid sequence, 211 residues long: Octanoyltransferase (211 aa).

Positions 32–207 (PCTYDEIWFV…ELSKFLEIFI (176 aa)) constitute a BPL/LPL catalytic domain. Substrate is bound by residues 71–78 (RGGQITYH), 138–140 (SLG), and 151–153 (GLA). The Acyl-thioester intermediate role is filled by Cys-169.

Belongs to the LipB family.

It localises to the cytoplasm. The catalysed reaction is octanoyl-[ACP] + L-lysyl-[protein] = N(6)-octanoyl-L-lysyl-[protein] + holo-[ACP] + H(+). It participates in protein modification; protein lipoylation via endogenous pathway; protein N(6)-(lipoyl)lysine from octanoyl-[acyl-carrier-protein]: step 1/2. Functionally, catalyzes the transfer of endogenously produced octanoic acid from octanoyl-acyl-carrier-protein onto the lipoyl domains of lipoate-dependent enzymes. Lipoyl-ACP can also act as a substrate although octanoyl-ACP is likely to be the physiological substrate. The protein is Octanoyltransferase of Buchnera aphidicola subsp. Acyrthosiphon pisum (strain APS) (Acyrthosiphon pisum symbiotic bacterium).